Consider the following 359-residue polypeptide: Cyclin-Y-like protein 1 (359 aa).

Phosphoserine occurs at positions 67, 105, and 112. The Cyclin N-terminal domain maps to 145–267 (VTLAIYYHIK…CQILKDITVE (123 aa)). Ser-344 is modified (phosphoserine).

Belongs to the cyclin family. Cyclin Y subfamily. In terms of assembly, interacts with CDK16; this interaction mutually increases the stability of CDK16 and CCNYL1 and increases the kinase activity of CDK16.

The protein resides in the cell membrane. Its function is as follows. Key regulator of Wnt signaling implicated in various biological processes including male fertility, embryonic neurogenesis and cortex development. Activates the cyclin-dependent kinase CDK16, and promotes sperm maturation. This Homo sapiens (Human) protein is Cyclin-Y-like protein 1.